We begin with the raw amino-acid sequence, 317 residues long: Retinol dehydrogenase 16 (317 aa).

33–57 (FITGCDSGFGTLLARQLDRRGMRVL) serves as a coordination point for NAD(+). The active-site Proton acceptor is tyrosine 176. The chain crosses the membrane as a helical span at residues 289–309 (LFYLPLSYLPTFLVDALLYWT).

It belongs to the short-chain dehydrogenases/reductases (SDR) family. As to quaternary structure, homodimer. In terms of processing, not glycosylated.

It localises to the endoplasmic reticulum membrane. Its subcellular location is the microsome membrane. The enzyme catalyses all-trans-retinol--[retinol-binding protein] + NAD(+) = all-trans-retinal--[retinol-binding protein] + NADH + H(+). It catalyses the reaction 9-cis-retinol + NAD(+) = 9-cis-retinal + NADH + H(+). It carries out the reaction 11-cis-retinol + NAD(+) = 11-cis-retinal + NADH + H(+). The catalysed reaction is 13-cis-retinol + NAD(+) = 13-cis-retinal + NADH + H(+). The enzyme catalyses androsterone + NAD(+) = 5alpha-androstan-3,17-dione + NADH + H(+). It catalyses the reaction 5alpha-androstane-3alpha,17beta-diol + NAD(+) = 17beta-hydroxy-5alpha-androstan-3-one + NADH + H(+). It functions in the pathway cofactor metabolism; retinol metabolism. Its function is as follows. Oxidoreductase with a preference for NAD. Oxidizes all-trans-retinol, 9-cis-retinol, 11-cis-retinol and 13-cis-retinol to the corresponding aldehydes. Has higher activity towards CRBP-bound retinol than with free retinol. Oxidizes 3-alpha-hydroxysteroids. Oxidizes androstanediol and androsterone to dihydrotestosterone and androstanedione. Can also catalyze the reverse reaction. The protein is Retinol dehydrogenase 16 of Mus musculus (Mouse).